The chain runs to 82 residues: Putative membrane protein insertion efficiency factor (82 aa).

The protein belongs to the UPF0161 family.

It localises to the cell inner membrane. In terms of biological role, could be involved in insertion of integral membrane proteins into the membrane. The polypeptide is Putative membrane protein insertion efficiency factor (Rickettsia massiliae (strain Mtu5)).